Here is a 657-residue protein sequence, read N- to C-terminus: Conserved oligomeric Golgi complex subunit 6 (657 aa).

The protein belongs to the COG6 family. Component of the conserved oligomeric Golgi complex which is composed of eight different subunits and is required for normal Golgi morphology and localization.

The protein localises to the golgi apparatus membrane. Functionally, required for normal Golgi function. The sequence is that of Conserved oligomeric Golgi complex subunit 6 (COG6) from Bos taurus (Bovine).